A 506-amino-acid polypeptide reads, in one-letter code: Chaperone SurA (506 aa).

An N-terminal signal peptide occupies residues 1-29 (MMRRLHSSRRFSGSLLALALGLALPLAHA). PpiC domains are found at residues 219-320 (PVML…KVLQ) and 351-450 (VTQT…QVLE).

It is found in the periplasm. The catalysed reaction is [protein]-peptidylproline (omega=180) = [protein]-peptidylproline (omega=0). In terms of biological role, chaperone involved in the correct folding and assembly of outer membrane proteins. Recognizes specific patterns of aromatic residues and the orientation of their side chains, which are found more frequently in integral outer membrane proteins. May act in both early periplasmic and late outer membrane-associated steps of protein maturation. The protein is Chaperone SurA of Bordetella avium (strain 197N).